Here is a 641-residue protein sequence, read N- to C-terminus: Anthrax toxin receptor-like (641 aa).

An N-terminal signal peptide occupies residues 1–27; that stretch reads MMSHSPSMPCSALFLLLLLLLPPTFKG. The Extracellular portion of the chain corresponds to 28–363; sequence GSLRYHGPGW…ASQGIVFKRT (336 aa). The VWFA domain occupies 76–247; that stretch reads DLYLVLDKSG…SALEGVVDPL (172 aa). A divalent metal cation is bound by residues serine 84, serine 86, and threonine 150. The helical transmembrane segment at 364–384 threads the bilayer; the sequence is WLMFLPVLLVTLLLLCCTWKL. Residues 385–641 lie on the Cytoplasmic side of the membrane; that stretch reads CIKPKKLPPP…FPPISKGPKF (257 aa). A disordered region spans residues 391–455; that stretch reads LPPPPPKPEK…ARPPPAPLPA (65 aa). A compositionally biased stretch (pro residues) spans 407–436; that stretch reads PPPSSPPAPGRGPGPGPSAGPGPGPGPSPG.

The protein belongs to the ATR family.

It is found in the membrane. In Mus musculus (Mouse), this protein is Anthrax toxin receptor-like (Antxrl).